The following is a 148-amino-acid chain: SsrA-binding protein (148 aa).

This sequence belongs to the SmpB family.

Its subcellular location is the cytoplasm. In terms of biological role, required for rescue of stalled ribosomes mediated by trans-translation. Binds to transfer-messenger RNA (tmRNA), required for stable association of tmRNA with ribosomes. tmRNA and SmpB together mimic tRNA shape, replacing the anticodon stem-loop with SmpB. tmRNA is encoded by the ssrA gene; the 2 termini fold to resemble tRNA(Ala) and it encodes a 'tag peptide', a short internal open reading frame. During trans-translation Ala-aminoacylated tmRNA acts like a tRNA, entering the A-site of stalled ribosomes, displacing the stalled mRNA. The ribosome then switches to translate the ORF on the tmRNA; the nascent peptide is terminated with the 'tag peptide' encoded by the tmRNA and targeted for degradation. The ribosome is freed to recommence translation, which seems to be the essential function of trans-translation. In Pseudothermotoga lettingae (strain ATCC BAA-301 / DSM 14385 / NBRC 107922 / TMO) (Thermotoga lettingae), this protein is SsrA-binding protein.